The following is a 250-amino-acid chain: MFLLLIILQALAVAIAQSQGDHKIIGGYRCVRNSQPWQVALQAGPGHRFLCGGVLLSDQWVITAAHCARPILHVALGKHNIRRWEATQQVVRVARQVPHPQYQPQAHDNDLMLLKLQKKVRLGRAVKTISVASSCASPGTPCRVSGWGTIASPIARYPTALQCVNVNIMSEQACHRAYPGIITSGMVCAGVPEGGKDSCQGDSGGPLVCGGQLQGLVSWGMERCAMPGYPGVYANLCNYHSWIQRTMQSN.

An N-terminal signal peptide occupies residues 1–18 (MFLLLIILQALAVAIAQS). A propeptide spans 19–23 (QGDHK) (activation peptide). A Peptidase S1 domain is found at 24–248 (IIGGYRCVRN…YHSWIQRTMQ (225 aa)). A disulfide bond links Cys-51 and Cys-67. Catalysis depends on charge relay system residues His-66 and Asp-110. 3 disulfides stabilise this stretch: Cys-142/Cys-209, Cys-174/Cys-188, and Cys-199/Cys-224. The Charge relay system role is filled by Ser-203.

The protein belongs to the peptidase S1 family. Kallikrein subfamily. In terms of processing, proteolytic cleavage of the activation peptide produces the active enzyme.

The protein resides in the secreted. It is found in the extracellular space. With respect to regulation, inhibited by SERPINA1, SERPINC1, SERPINE1, SERPINF2, aprotinin, soybean, trypsin inhibitor and leupeptin. Inhibited by serine protease inhibitor SPINK5. Has an autoproteolytic activity which may have a regulatory effect. Activated by citrate and inhibited by zinc and to a lower extent by manganese. In terms of biological role, serine-type endopeptidase with a dual trypsin-like and chymotrypsin-like substrate specificity. May activate/inactivate the proteinase-activated receptors F2R, F2RL1 and F2RL3 and other kallikreins including KLK1, KLK3, KLK5 and KLK11. May function in seminal clot liquefaction through direct cleavage of the semenogelin SEMG1 and SEMG2 and activation of KLK3. May function through desmoglein DSG1 cleavage in epidermal desquamation a process by which the most superficial corneocytes are shed from the skin surface. May be involved in several aspects of tumor progression including growth, invasion and angiogenesis. The polypeptide is Kallikrein-14 (Klk14) (Mus musculus (Mouse)).